The following is a 316-amino-acid chain: Ribonuclease Z (316 aa).

7 residues coordinate Zn(2+): His59, His61, Asp63, His64, His135, Asp203, and His261. Asp63 serves as the catalytic Proton acceptor.

Belongs to the RNase Z family. As to quaternary structure, homodimer. Zn(2+) serves as cofactor.

The enzyme catalyses Endonucleolytic cleavage of RNA, removing extra 3' nucleotides from tRNA precursor, generating 3' termini of tRNAs. A 3'-hydroxy group is left at the tRNA terminus and a 5'-phosphoryl group is left at the trailer molecule.. Zinc phosphodiesterase, which displays some tRNA 3'-processing endonuclease activity. Probably involved in tRNA maturation, by removing a 3'-trailer from precursor tRNA. The protein is Ribonuclease Z of Nanoarchaeum equitans (strain Kin4-M).